Here is a 390-residue protein sequence, read N- to C-terminus: GTPase Obg (390 aa).

Positions Met1–Leu159 constitute an Obg domain. The segment at Ser22–Gly42 is disordered. Residues Gly33–Gly42 are compositionally biased toward gly residues. In terms of domain architecture, OBG-type G spans Ala160–Glu333. GTP is bound by residues Gly166–Ser173, Phe191–Ile195, Asp213–Gly216, Asn283–Asp286, and Ser314–Leu316. 2 residues coordinate Mg(2+): Ser173 and Thr193.

Belongs to the TRAFAC class OBG-HflX-like GTPase superfamily. OBG GTPase family. Monomer. Requires Mg(2+) as cofactor.

It is found in the cytoplasm. Its function is as follows. An essential GTPase which binds GTP, GDP and possibly (p)ppGpp with moderate affinity, with high nucleotide exchange rates and a fairly low GTP hydrolysis rate. Plays a role in control of the cell cycle, stress response, ribosome biogenesis and in those bacteria that undergo differentiation, in morphogenesis control. This chain is GTPase Obg, found in Photobacterium profundum (strain SS9).